A 434-amino-acid chain; its full sequence is MEKIIVRGGKRLNGTVRVEGAKNAVLPIIAAALLASDGKNVLSEVPVLSDVYTINEVLRHLNAEVVFENNQVTIDASKELNIEAPFEYVRKMRASVQVMGPLLARNGRARIALPGGCAIGSRPIDQHLKGFEAMGAKVQVGNGFVEAYVEGELKGAKIYLDFPSVGATENIMSAATLAKGTTILENAAKEPEIVDLANFLNAMGAKVRGAGTGTIRIEGVDKLYGANHSIIPDRIEAGTFMVAAAITGGDILIENAVPEHLRSITAKMEEMGVKIIEENEGVRVIGPDKLKAVDIKTMPHPGFPTDMQSQMMALLLQADGTSMITETVFENRFMHVEEFRRMNADIKIEGRSVIMNGPNSLQGAEVAATDLRAAAALILAGLVSEGYTRVTELKHLDRGYVNFHKKLAALGATIERVNEKVEEVKEQEVSDLHA.

Phosphoenolpyruvate is bound at residue 22-23 (KN). Residue R93 participates in UDP-N-acetyl-alpha-D-glucosamine binding. The Proton donor role is filled by C117. C117 carries the 2-(S-cysteinyl)pyruvic acid O-phosphothioketal modification. Residues 122–126 (RPIDQ), D306, and V328 contribute to the UDP-N-acetyl-alpha-D-glucosamine site.

The protein belongs to the EPSP synthase family. MurA subfamily.

The protein localises to the cytoplasm. The catalysed reaction is phosphoenolpyruvate + UDP-N-acetyl-alpha-D-glucosamine = UDP-N-acetyl-3-O-(1-carboxyvinyl)-alpha-D-glucosamine + phosphate. Its pathway is cell wall biogenesis; peptidoglycan biosynthesis. In terms of biological role, cell wall formation. Adds enolpyruvyl to UDP-N-acetylglucosamine. The protein is UDP-N-acetylglucosamine 1-carboxyvinyltransferase 1 of Bacillus cereus (strain ATCC 10987 / NRS 248).